The following is a 539-amino-acid chain: F-box/WD-40 repeat-containing protein At5g21040 (539 aa).

One can recognise an F-box domain in the interval 65 to 111 (STTIIDLPQALISEILNCLDPKELGLVSCVSTYLHRLASEHHAWKEF). 7 WD repeats span residues 160–199 (GHTE…SIAA), 201–239 (KPLG…RNLF), 255–292 (GHEG…CVKT), 294–330 (RHSD…PLAI), 334–373 (AHEG…SETS), 382–419 (PHTS…KTNR), and 433–477 (PPQR…EIER). Residues 505-539 (GRPDQCSIAAHKNPINGERNRAWHSKRRASGKAKA) form a disordered region. Positions 526–539 (AWHSKRRASGKAKA) are enriched in basic residues.

This Arabidopsis thaliana (Mouse-ear cress) protein is F-box/WD-40 repeat-containing protein At5g21040.